The following is a 101-amino-acid chain: NAD(P)H-quinone oxidoreductase subunit 4L, chloroplastic (101 aa).

Transmembrane regions (helical) follow at residues 2-22 (MFEH…YGLI), 32-52 (ICLE…SDLF), and 61-81 (IFAI…LSIL).

It belongs to the complex I subunit 4L family. NDH is composed of at least 16 different subunits, 5 of which are encoded in the nucleus.

The protein resides in the plastid. The protein localises to the chloroplast thylakoid membrane. It carries out the reaction a plastoquinone + NADH + (n+1) H(+)(in) = a plastoquinol + NAD(+) + n H(+)(out). The catalysed reaction is a plastoquinone + NADPH + (n+1) H(+)(in) = a plastoquinol + NADP(+) + n H(+)(out). NDH shuttles electrons from NAD(P)H:plastoquinone, via FMN and iron-sulfur (Fe-S) centers, to quinones in the photosynthetic chain and possibly in a chloroplast respiratory chain. The immediate electron acceptor for the enzyme in this species is believed to be plastoquinone. Couples the redox reaction to proton translocation, and thus conserves the redox energy in a proton gradient. In Oryza nivara (Indian wild rice), this protein is NAD(P)H-quinone oxidoreductase subunit 4L, chloroplastic.